The sequence spans 136 residues: MKRHILATVIASLVAAPAMALAAGNNILSVHILDQQTGKPAPGVEVVLEQKKDNGWTQLNTGHTDQDGRIKALWPEKAAAPGDYRVIFKTGQYFESKKLDTFFPEIPVEFHISKTNEHYHVPLLLSQYGYSTYRGS.

Positions 1-22 (MKRHILATVIASLVAAPAMALA) are cleaved as a signal peptide. Residues His-31, Arg-69, and Tyr-133 each contribute to the substrate site.

Belongs to the transthyretin family. 5-hydroxyisourate hydrolase subfamily. In terms of assembly, homotetramer.

It is found in the periplasm. The enzyme catalyses 5-hydroxyisourate + H2O = 5-hydroxy-2-oxo-4-ureido-2,5-dihydro-1H-imidazole-5-carboxylate + H(+). In terms of biological role, catalyzes the hydrolysis of 5-hydroxyisourate (HIU) to 2-oxo-4-hydroxy-4-carboxy-5-ureidoimidazoline (OHCU). This Salmonella dublin protein is 5-hydroxyisourate hydrolase (hiuH).